The sequence spans 314 residues: Glycerate dehydrogenase (314 aa).

NAD(+) contacts are provided by residues T74, 157–158 (AL), 228–230 (TAR), and D254. Residue R230 is part of the active site. Residue E259 is part of the active site. H280 acts as the Proton donor in catalysis. 280-283 (HVAW) is an NAD(+) binding site.

This sequence belongs to the D-isomer specific 2-hydroxyacid dehydrogenase family. Homodimer.

The protein resides in the cytoplasm. The catalysed reaction is (R)-glycerate + NAD(+) = 3-hydroxypyruvate + NADH + H(+). It functions in the pathway one-carbon metabolism; formaldehyde assimilation via serine pathway. In terms of biological role, plays a central role in assimilation of carbon. It converts hydroxypyruvate to glycerate as a key step in the serine cycle, and may also play an important role in C2 reactions, by interconverting glyoxylate and glycolate. The polypeptide is Glycerate dehydrogenase (hprA) (Methylorubrum extorquens (strain ATCC 14718 / DSM 1338 / JCM 2805 / NCIMB 9133 / AM1) (Methylobacterium extorquens)).